The following is a 381-amino-acid chain: E3 ubiquitin-protein ligase RNF133 (381 aa).

The 103-residue stretch at S65–I167 folds into the PA domain. Residues W186–Y208 traverse the membrane as a helical segment. Residues C256–K297 form an RING-type; atypical zinc finger. Residues L340–L381 form a disordered region. A compositionally biased stretch (polar residues) spans R344 to S363.

As to quaternary structure, interacts with E3 ligase UBE2J1. Post-translationally, auto-ubiquitinated.

It is found in the endoplasmic reticulum membrane. It catalyses the reaction S-ubiquitinyl-[E2 ubiquitin-conjugating enzyme]-L-cysteine + [acceptor protein]-L-lysine = [E2 ubiquitin-conjugating enzyme]-L-cysteine + N(6)-ubiquitinyl-[acceptor protein]-L-lysine.. It functions in the pathway protein modification; protein ubiquitination. Has E3 ubiquitin-protein ligase activity. Plays a role in male fecundity through the interaction with the E2 ubituitin-protein ligase UBE2J1. This is E3 ubiquitin-protein ligase RNF133 (Rnf133) from Rattus norvegicus (Rat).